Consider the following 792-residue polypeptide: Probable exo-1,4-beta-xylosidase xlnD (792 aa).

The N-terminal stretch at 1–20 (MSVAKSIAAVLVALLPGALA) is a signal peptide. N-linked (GlcNAc...) asparagine glycans are attached at residues N23, N87, N118, N142, and N246. D310 is an active-site residue. Residues N326, N385, N404, N440, N477, N518, N679, and N701 are each glycosylated (N-linked (GlcNAc...) asparagine).

Belongs to the glycosyl hydrolase 3 family.

The protein localises to the secreted. The enzyme catalyses Hydrolysis of (1-&gt;4)-beta-D-xylans, to remove successive D-xylose residues from the non-reducing termini.. Its pathway is glycan degradation; xylan degradation. In terms of biological role, xylan 1,4-beta-xylosidase involved in the hydrolysis of xylan, a major structural heterogeneous polysaccharide found in plant biomass representing the second most abundant polysaccharide in the biosphere, after cellulose. The sequence is that of Probable exo-1,4-beta-xylosidase xlnD (xlnD) from Aspergillus fumigatus (strain ATCC MYA-4609 / CBS 101355 / FGSC A1100 / Af293) (Neosartorya fumigata).